Reading from the N-terminus, the 202-residue chain is Xanthine phosphoribosyltransferase (202 aa).

Leu20 and Asn27 together coordinate xanthine. 128 to 132 (ANGEA) is a binding site for 5-phospho-alpha-D-ribose 1-diphosphate. Lys156 lines the xanthine pocket.

Belongs to the purine/pyrimidine phosphoribosyltransferase family. Xpt subfamily. As to quaternary structure, homodimer.

The protein localises to the cytoplasm. It carries out the reaction XMP + diphosphate = xanthine + 5-phospho-alpha-D-ribose 1-diphosphate. The protein operates within purine metabolism; XMP biosynthesis via salvage pathway; XMP from xanthine: step 1/1. Converts the preformed base xanthine, a product of nucleic acid breakdown, to xanthosine 5'-monophosphate (XMP), so it can be reused for RNA or DNA synthesis. The protein is Xanthine phosphoribosyltransferase of Alkaliphilus metalliredigens (strain QYMF).